A 499-amino-acid polypeptide reads, in one-letter code: ATP synthase subunit alpha, chloroplastic (499 aa).

170–177 (GDRQTGKT) is a binding site for ATP.

It belongs to the ATPase alpha/beta chains family. F-type ATPases have 2 components, CF(1) - the catalytic core - and CF(0) - the membrane proton channel. CF(1) has five subunits: alpha(3), beta(3), gamma(1), delta(1), epsilon(1). CF(0) has four main subunits: a, b, b' and c.

The protein localises to the plastid. It is found in the chloroplast thylakoid membrane. It carries out the reaction ATP + H2O + 4 H(+)(in) = ADP + phosphate + 5 H(+)(out). Produces ATP from ADP in the presence of a proton gradient across the membrane. The alpha chain is a regulatory subunit. The polypeptide is ATP synthase subunit alpha, chloroplastic (Emiliania huxleyi (Coccolithophore)).